We begin with the raw amino-acid sequence, 166 residues long: Large ribosomal subunit protein uL10 (166 aa).

The protein belongs to the universal ribosomal protein uL10 family. In terms of assembly, part of the ribosomal stalk of the 50S ribosomal subunit. The N-terminus interacts with L11 and the large rRNA to form the base of the stalk. The C-terminus forms an elongated spine to which L12 dimers bind in a sequential fashion forming a multimeric L10(L12)X complex.

Forms part of the ribosomal stalk, playing a central role in the interaction of the ribosome with GTP-bound translation factors. The chain is Large ribosomal subunit protein uL10 from Streptococcus gordonii (strain Challis / ATCC 35105 / BCRC 15272 / CH1 / DL1 / V288).